Reading from the N-terminus, the 356-residue chain is MLKVLAIETSCDETSVSVVSNSNDIYKIHSNIVASQIEDHSKWGGVVPELAARKHLELIPFVLEEALEESKISIEEIDAIASTVTPGLVGCLRVGSITARSLCTLYSKPFLGIHHLEGHLSSILFSKNYPKPPFLTLLVSGGHTELIKIGERRIMQRLGRSYDDAAGEAFDKVGRLLGLSYPGGPAIAEIAKKGNSLKFNLPKCKISDKKGGFLKYDFSFSGLKTAVLRLVEKIRLNGDEIPIPDIAASFERVVSEVLVERTIKCAVDYDLDNVVVVGGVAANDTLRKMMISEAGKKSIKVHLAPLNLCTDNAAMIGAAALFRLKFKAHESSLELGISGRLPIDQANTLYANKPPF.

Fe cation is bound by residues His115 and His119. Substrate contacts are provided by residues Leu138–Gly142, Asp171, Gly184, and Asn283. Asp311 contacts Fe cation.

It belongs to the KAE1 / TsaD family. The cofactor is Fe(2+).

The protein resides in the cytoplasm. It catalyses the reaction L-threonylcarbamoyladenylate + adenosine(37) in tRNA = N(6)-L-threonylcarbamoyladenosine(37) in tRNA + AMP + H(+). Functionally, required for the formation of a threonylcarbamoyl group on adenosine at position 37 (t(6)A37) in tRNAs that read codons beginning with adenine. Is involved in the transfer of the threonylcarbamoyl moiety of threonylcarbamoyl-AMP (TC-AMP) to the N6 group of A37, together with TsaE and TsaB. TsaD likely plays a direct catalytic role in this reaction. The chain is tRNA N6-adenosine threonylcarbamoyltransferase from Prochlorococcus marinus (strain MIT 9515).